Reading from the N-terminus, the 702-residue chain is Mesothelin-like protein (702 aa).

A signal peptide spans 1 to 35 (MAAAVTIPGPRIGALQSSGLTLLLSLAAHCSGPQA). Topologically, residues 36 to 638 (KVLSPGGLDA…AQASTSGSLW (603 aa)) are extracellular. N-linked (GlcNAc...) asparagine glycans are attached at residues N122, N307, and N424. Positions 588 to 611 (QLGLDASPTSPTGPAHGTRGPPST) are disordered. Residues 639-668 (APLGYLPLAMALPCSLLCLLHWGTCILVSV) traverse the membrane as a helical segment. Topologically, residues 669-702 (DSVASGWLGSQGSGAGKTEVLDSAGRPLGLTGQL) are cytoplasmic.

This sequence belongs to the mesothelin family.

It localises to the membrane. Its function is as follows. May play a role in cellular adhesion. The polypeptide is Mesothelin-like protein (MSLNL) (Homo sapiens (Human)).